The chain runs to 72 residues: Hirudin variant-2 (72 aa).

The signal sequence occupies residues 1–7; sequence AICVSQA. Positions 8–10 are interaction with thrombin active site; the sequence is ITY. 3 disulfides stabilise this stretch: C13–C21, C23–C35, and C29–C46. Residues 47 to 72 are disordered; it reads VTGEGTPNPESHNNGDFEEIPEEYLQ. The O-linked (GalNAc...) threonine glycan is linked to T52. Positions 62 to 72 are interaction with fibrinogen-binding exosite of thrombin; the sequence is DFEEIPEEYLQ. The span at 62–72 shows a compositional bias: acidic residues; the sequence is DFEEIPEEYLQ. A Sulfotyrosine modification is found at Y70.

This sequence belongs to the protease inhibitor I14 (hirudin) family.

The protein localises to the secreted. Hirudin is a potent thrombin-specific protease inhibitor. It forms a stable non-covalent complex with alpha-thrombin, thereby abolishing its ability to cleave fibrinogen. This Hirudo medicinalis (Medicinal leech) protein is Hirudin variant-2.